The primary structure comprises 286 residues: MAITTAASRLGTEPFSDAPKVELRPKASREEVESVIRAVYRHVLGNDYILASERLVSAESLLRDGNLTVREFVRSVAKSELYKKKFFYNSFQTRLIELNYKHLLGRAPYDESEVVYHLDLYQNKGYDAEIDSYIDSWEYQSNFGDNVVPYYRGFETQVGQKTAGFNRIFRLYRGYANSDRAQVEGTKSRLARELASNKASTIVGPSGTNDSWGFRASADVAPKKNLGNAVGEGDRVYRLEVTGIRSPGYPSVRRSSTVFIVPYERLSDKIQQVHKQGGKIVSVTSA.

The PBS-linker domain occupies alanine 2 to arginine 180. Positions aspartate 234–alanine 286 constitute a CpcD-like domain.

This sequence belongs to the phycobilisome linker protein family. In terms of assembly, associated with the phycobilisome, a hemidiscoidal structure that is composed of two distinct substructures: a core complex and a number of rods radiating from the core.

It is found in the cellular thylakoid membrane. In terms of biological role, rod linker protein, associated with phycocyanin. Linker polypeptides determine the state of aggregation and the location of the disk-shaped phycobiliprotein units within the phycobilisome and modulate their spectroscopic properties in order to mediate a directed and optimal energy transfer. The sequence is that of Phycobilisome 32.1 kDa linker polypeptide, phycocyanin-associated, rod (cpcC) from Nostoc sp. (strain PCC 7120 / SAG 25.82 / UTEX 2576).